The following is a 598-amino-acid chain: mRNA-capping enzyme (598 aa).

The interval 1–215 (MSQTGAPPRW…GSASAPASEP (215 aa)) is TPase. In terms of domain architecture, Tyrosine-protein phosphatase spans 25-183 (LPMKTMLGPR…FRRYGDVEDA (159 aa)). Cys126 acts as the Phosphocysteine intermediate in catalysis. The segment at 186 to 227 (APPLPEWCFDEDEEEDGEEDGSASAPASEPSSSHTGQSKKKK) is disordered. The span at 193–206 (CFDEDEEEDGEEDG) shows a compositional bias: acidic residues. Over residues 207-218 (SASAPASEPSSS) the composition is skewed to low complexity. Residues 233 to 598 (GAVFLEGVSV…PKRSANSIPQ (366 aa)) form a GTase region. The active-site N6-GMP-lysine intermediate is the Lys298. GTP is bound by residues Arg303, Arg319, 347–349 (DGE), 462–464 (KWK), and 532–537 (RQRVDK). The segment at 575 to 598 (RKNPADSDLMPPPPPKRSANSIPQ) is disordered.

This sequence in the N-terminal section; belongs to the non-receptor class of the protein-tyrosine phosphatase family. It in the C-terminal section; belongs to the eukaryotic GTase family.

The protein localises to the nucleus. It catalyses the reaction a 5'-end triphospho-ribonucleoside in mRNA + H2O = a 5'-end diphospho-ribonucleoside in mRNA + phosphate + H(+). The enzyme catalyses a 5'-end diphospho-ribonucleoside in mRNA + GTP + H(+) = a 5'-end (5'-triphosphoguanosine)-ribonucleoside in mRNA + diphosphate. Functionally, bifunctional mRNA-capping enzyme exhibiting RNA 5'-triphosphate monophosphatase activity in the N-terminal part and mRNA guanylyltransferase activity in the C-terminal part. Catalyzes the first two steps of cap formation: by removing the gamma-phosphate from the 5'-triphosphate end of nascent mRNA to yield a diphosphate end, and by transferring the GMP moiety of GTP to the 5'-diphosphate terminus of RNA via a covalent enzyme-GMP reaction intermediate. In Danio rerio (Zebrafish), this protein is mRNA-capping enzyme (rngtt).